The primary structure comprises 345 residues: NADH-quinone oxidoreductase subunit H (345 aa).

Residues 1–15 are Lumenal-facing; that stretch reads MADFWATSLGQTLIL. A helical transmembrane segment spans residues 16–35; it reads LAQGLGIIAFVMIGLLLLVW. The Cytoplasmic segment spans residues 36 to 86; the sequence is GDRKIWAAVQMRKGPNVVGAFGLLQSVADAAKYVFKEIVVPAGVDKPVYFL. A helical transmembrane segment spans residues 87-106; it reads APMLSLVLALLAWVVVPFNE. Residues 107-110 lie on the Lumenal side of the membrane; that stretch reads GWVM. A helical transmembrane segment spans residues 111–130; that stretch reads ADINVAVLFVFAVSSLEVYG. The Cytoplasmic segment spans residues 131–156; the sequence is VIMGGWASNSKYPFLGSLRSAAQMIS. The chain crosses the membrane as a helical span at residues 157 to 176; sequence YEVSMGLIIVGVIISTGSMN. Residues 177–191 lie on the Lumenal side of the membrane; it reads LSAIVEAQRGDFGLL. Residues 192-211 traverse the membrane as a helical segment; sequence NWYWLPHLPMVALFFISALA. At 212–245 the chain is on the cytoplasmic side; that stretch reads ETNRPPFDLPEAESELVAGFMVEYSSTPYLLFMA. The chain crosses the membrane as a helical span at residues 246–265; that stretch reads GEYIAVWLMCALTSVLFFGG. Residues 266–276 lie on the Lumenal side of the membrane; it reads WLSPIPGVPDG. Residues 277 to 296 traverse the membrane as a helical segment; the sequence is VLWMVAKMAAVFFVFAMVKA. The Cytoplasmic portion of the chain corresponds to 297 to 313; sequence IVPRYRYDQLMRIGWKV. The helical transmembrane segment at 314–333 threads the bilayer; that stretch reads FLPLSLAWVVVVAFLAKFEV. Residues 334–345 lie on the Lumenal side of the membrane; the sequence is LGGFWARWSIGA.

It belongs to the complex I subunit 1 family. NDH-1 is composed of 14 different subunits. Subunits NuoA, H, J, K, L, M, N constitute the membrane sector of the complex.

The protein localises to the cellular chromatophore membrane. The enzyme catalyses a quinone + NADH + 5 H(+)(in) = a quinol + NAD(+) + 4 H(+)(out). Functionally, NDH-1 shuttles electrons from NADH, via FMN and iron-sulfur (Fe-S) centers, to quinones in the respiratory chain. The immediate electron acceptor for the enzyme in this species is believed to be ubiquinone. Couples the redox reaction to proton translocation (for every two electrons transferred, four hydrogen ions are translocated across the cytoplasmic membrane), and thus conserves the redox energy in a proton gradient. This subunit may bind ubiquinone. The sequence is that of NADH-quinone oxidoreductase subunit H from Rhodobacter capsulatus (Rhodopseudomonas capsulata).